Consider the following 192-residue polypeptide: Protein GrpE (192 aa).

The segment at 1–41 is disordered; it reads MSKEEFPHEKDLKDEVTPDKAPKKDPKAAPKEEVKENPVEN.

Belongs to the GrpE family. Homodimer.

The protein resides in the cytoplasm. Functionally, participates actively in the response to hyperosmotic and heat shock by preventing the aggregation of stress-denatured proteins, in association with DnaK and GrpE. It is the nucleotide exchange factor for DnaK and may function as a thermosensor. Unfolded proteins bind initially to DnaJ; upon interaction with the DnaJ-bound protein, DnaK hydrolyzes its bound ATP, resulting in the formation of a stable complex. GrpE releases ADP from DnaK; ATP binding to DnaK triggers the release of the substrate protein, thus completing the reaction cycle. Several rounds of ATP-dependent interactions between DnaJ, DnaK and GrpE are required for fully efficient folding. The polypeptide is Protein GrpE (Lactobacillus johnsonii (strain CNCM I-12250 / La1 / NCC 533)).